Consider the following 144-residue polypeptide: D-aminoacyl-tRNA deacylase (144 aa).

The Gly-cisPro motif, important for rejection of L-amino acids signature appears at 136–137 (GP).

Belongs to the DTD family. In terms of assembly, homodimer.

The protein localises to the cytoplasm. It carries out the reaction glycyl-tRNA(Ala) + H2O = tRNA(Ala) + glycine + H(+). The catalysed reaction is a D-aminoacyl-tRNA + H2O = a tRNA + a D-alpha-amino acid + H(+). Its function is as follows. An aminoacyl-tRNA editing enzyme that deacylates mischarged D-aminoacyl-tRNAs. Also deacylates mischarged glycyl-tRNA(Ala), protecting cells against glycine mischarging by AlaRS. Acts via tRNA-based rather than protein-based catalysis; rejects L-amino acids rather than detecting D-amino acids in the active site. By recycling D-aminoacyl-tRNA to D-amino acids and free tRNA molecules, this enzyme counteracts the toxicity associated with the formation of D-aminoacyl-tRNA entities in vivo and helps enforce protein L-homochirality. This is D-aminoacyl-tRNA deacylase from Aliivibrio salmonicida (strain LFI1238) (Vibrio salmonicida (strain LFI1238)).